The chain runs to 216 residues: Octanoyltransferase (216 aa).

The region spanning 32-207 (PDSQDEIWLV…QLVKHLDYAE (176 aa)) is the BPL/LPL catalytic domain. Residues 71 to 78 (RGGQVTYH), 138 to 140 (SLG), and 151 to 153 (GLA) each bind substrate. Cysteine 169 acts as the Acyl-thioester intermediate in catalysis.

The protein belongs to the LipB family.

It localises to the cytoplasm. The catalysed reaction is octanoyl-[ACP] + L-lysyl-[protein] = N(6)-octanoyl-L-lysyl-[protein] + holo-[ACP] + H(+). The protein operates within protein modification; protein lipoylation via endogenous pathway; protein N(6)-(lipoyl)lysine from octanoyl-[acyl-carrier-protein]: step 1/2. In terms of biological role, catalyzes the transfer of endogenously produced octanoic acid from octanoyl-acyl-carrier-protein onto the lipoyl domains of lipoate-dependent enzymes. Lipoyl-ACP can also act as a substrate although octanoyl-ACP is likely to be the physiological substrate. The chain is Octanoyltransferase from Pseudomonas putida (strain ATCC 47054 / DSM 6125 / CFBP 8728 / NCIMB 11950 / KT2440).